The chain runs to 237 residues: V-type proton ATPase subunit E3 (237 aa).

An N-acetylmethionine modification is found at M1. A coiled-coil region spans residues 9 to 67 (QIQQMVRFIRQEAEEKANEISISSEEEFNIEKLQLVEAEKKKIRQEYEKKEKQVDVRKK).

Belongs to the V-ATPase E subunit family. V-ATPase is a heteromultimeric enzyme composed of a peripheral catalytic V1 complex (components A to H) attached to an integral membrane V0 proton pore complex (components: a, c, c'', d and e).

Its subcellular location is the vacuole membrane. In terms of biological role, subunit of the peripheral V1 complex of vacuolar ATPase essential for assembly or catalytic function. V-ATPase is responsible for acidifying a variety of intracellular compartments in eukaryotic cells. This chain is V-type proton ATPase subunit E3 (VHA-E3), found in Arabidopsis thaliana (Mouse-ear cress).